Consider the following 269-residue polypeptide: Putative pyridoxine kinase (269 aa).

Residue Asn-139 participates in ATP binding. Glu-142 lines the Mg(2+) pocket. ATP is bound by residues 176 to 180, Asp-189, Val-205, Gly-214, and Lys-239; that span reads KGGGR.

The protein belongs to the ThiD family.

It catalyses the reaction pyridoxal + ATP = pyridoxal 5'-phosphate + ADP + H(+). Its function is as follows. Phosphorylates B6 vitamers; functions in a salvage pathway. Uses pyridoxal, pyridoxine, and pyridoxamine as substrates. This chain is Putative pyridoxine kinase (pdxK), found in Treponema pallidum (strain Nichols).